The primary structure comprises 309 residues: Olfactory receptor 2G3 (309 aa).

Residues 1–25 are Extracellular-facing; the sequence is MGLGNESSLMDFILLGFSDHPRLEA. A glycan (N-linked (GlcNAc...) asparagine) is linked at N5. Residues 26–49 traverse the membrane as a helical segment; that stretch reads VLFVFVLFFYLLTLVGNFTIIIIS. Residues 50–57 are Cytoplasmic-facing; that stretch reads YLDPPLHT. Residues 58-79 traverse the membrane as a helical segment; the sequence is PMYFFLSNLSLLDICFTTSLAP. Topologically, residues 80–100 are extracellular; it reads QTLVNLQRPKKTITYGGCVAQ. A disulfide bond links C97 and C189. Residues 101–120 traverse the membrane as a helical segment; that stretch reads LYISLALGSTECILLADMAL. The Cytoplasmic segment spans residues 121-139; sequence DRYIAVCKPLHYVVIMNPR. The helical transmembrane segment at 140 to 158 threads the bilayer; it reads LCQQLASISWLSGLASSLI. Topologically, residues 159-195 are extracellular; sequence HATFTLQLPLCGNHRLDHFICEVPALLKLACVDTTVN. A helical membrane pass occupies residues 196 to 219; the sequence is ELVLFVVSVLFVVIPPALISISYG. The Cytoplasmic segment spans residues 220–236; it reads FITQAVLRIKSVEARHK. A helical membrane pass occupies residues 237 to 259; it reads AFSTCSSHLTVVIIFYGTIIYVY. Residues 260–272 are Extracellular-facing; it reads LQPSDSYAQDQGK. The chain crosses the membrane as a helical span at residues 273 to 292; it reads FISLFYTMVTPTLNPIIYTL. Residues 293-309 lie on the Cytoplasmic side of the membrane; sequence RNKDMKEALRKLLSGKL.

The protein belongs to the G-protein coupled receptor 1 family.

It localises to the cell membrane. Its function is as follows. Odorant receptor. The sequence is that of Olfactory receptor 2G3 (OR2G3) from Homo sapiens (Human).